The sequence spans 82 residues: Consomatin Ro2 (82 aa).

The signal sequence occupies residues 1 to 22; the sequence is MQTAYWLMVMMMVWITAPLYEG. Residues 23-57 constitute a propeptide that is removed on maturation; it reads GKPNDVIRGLVPDDLTPQFILRSLISRRRSDKDVR. A disulfide bridge connects residues cysteine 62 and cysteine 68. D-tryptophan is present on tryptophan 64. Proline 69 and proline 70 each carry 4-hydroxyproline. Residues 72–82 constitute a propeptide that is removed on maturation; the sequence is LWRRHDRKGKD.

Belongs to the conotoxin C superfamily. Consomatin family. In terms of tissue distribution, expressed by the venom duct.

Its subcellular location is the secreted. Its function is as follows. Moderately activates human somatostatin receptors (SSTR) with a preferential activation of SSTR1 and SSTR4. In vivo, does not cause behavioral changes in mice within a few minutes of intracranial injection, but causes a progressive loss of movement thereafter. Four to five hours after injection, mice recover, even with the highest dose tested. Shows antinociception and antihyperalgesia activities in two mouse models of acute pain, most probably by acting outside the central nervous system. This is Consomatin Ro2 from Conus rolani (Cone snail).